The chain runs to 140 residues: NTF2-related export protein 1 (140 aa).

A2 carries the N-acetylalanine modification. Positions 16-135 (AAEEFVNVYY…WKIASDCFRF (120 aa)) constitute an NTF2 domain.

In terms of assembly, heterodimer with NXF1. Forms a complex with RANGAP1, RANBP2/NUP358 and NXF1. Interacts (via NTF2 domain) with NXF1. Stabilizes the NTF2 domain of NXF1 by heterodimerization. The formation of NXF1-NXT1 heterodimers is required for the NXF1-mediated nuclear mRNA export. Preferentially binds Ran-GTP. Associates with NXF2, NXF3 and NXF5. Does not bind nucleoporins (NPC) directly, its association to NPC is mediated by NXF1.

The protein localises to the nucleus. The protein resides in the nucleus speckle. Its subcellular location is the cytoplasm. In terms of biological role, stimulator of protein export for NES-containing proteins. Also plays a role in the nuclear export of U1 snRNA, tRNA, and mRNA. The NXF1-NXT1 heterodimer is involved in the export of HSP70 mRNA in conjunction with ALYREF/THOC4 and THOC5. The protein is NTF2-related export protein 1 (NXT1) of Bos taurus (Bovine).